A 302-amino-acid chain; its full sequence is Aspartate carbamoyltransferase catalytic subunit (302 aa).

Carbamoyl phosphate is bound by residues arginine 53 and threonine 54. Lysine 82 is a binding site for L-aspartate. Residues arginine 103, histidine 131, and glutamine 134 each contribute to the carbamoyl phosphate site. 2 residues coordinate L-aspartate: arginine 164 and arginine 223. Residues leucine 260 and proline 261 each coordinate carbamoyl phosphate.

The protein belongs to the aspartate/ornithine carbamoyltransferase superfamily. ATCase family. Heterooligomer of catalytic and regulatory chains.

The enzyme catalyses carbamoyl phosphate + L-aspartate = N-carbamoyl-L-aspartate + phosphate + H(+). Its pathway is pyrimidine metabolism; UMP biosynthesis via de novo pathway; (S)-dihydroorotate from bicarbonate: step 2/3. Catalyzes the condensation of carbamoyl phosphate and aspartate to form carbamoyl aspartate and inorganic phosphate, the committed step in the de novo pyrimidine nucleotide biosynthesis pathway. This is Aspartate carbamoyltransferase catalytic subunit from Methanococcus maripaludis (strain C6 / ATCC BAA-1332).